Here is a 453-residue protein sequence, read N- to C-terminus: tRNA-2-methylthio-N(6)-dimethylallyladenosine synthase (453 aa).

The MTTase N-terminal domain occupies 7–123 (GTYWITTFGC…LDTLLSQVEA (117 aa)). Residues C16, C52, C86, C158, C162, and C165 each coordinate [4Fe-4S] cluster. The 238-residue stretch at 144-381 (RDSSLCAWVN…NALVERKAKA (238 aa)) folds into the Radical SAM core domain. The TRAM domain maps to 384–447 (QRYLGRVEEV…AFSLSGSAQA (64 aa)).

This sequence belongs to the methylthiotransferase family. MiaB subfamily. Monomer. Requires [4Fe-4S] cluster as cofactor.

It is found in the cytoplasm. It catalyses the reaction N(6)-dimethylallyladenosine(37) in tRNA + (sulfur carrier)-SH + AH2 + 2 S-adenosyl-L-methionine = 2-methylsulfanyl-N(6)-dimethylallyladenosine(37) in tRNA + (sulfur carrier)-H + 5'-deoxyadenosine + L-methionine + A + S-adenosyl-L-homocysteine + 2 H(+). Functionally, catalyzes the methylthiolation of N6-(dimethylallyl)adenosine (i(6)A), leading to the formation of 2-methylthio-N6-(dimethylallyl)adenosine (ms(2)i(6)A) at position 37 in tRNAs that read codons beginning with uridine. This Synechococcus sp. (strain RCC307) protein is tRNA-2-methylthio-N(6)-dimethylallyladenosine synthase.